We begin with the raw amino-acid sequence, 373 residues long: tRNA-specific 2-thiouridylase MnmA (373 aa).

ATP contacts are provided by residues 12 to 19 (GMSGGVDS) and Met-38. The interaction with target base in tRNA stretch occupies residues 98–100 (NPD). Cys-103 acts as the Nucleophile in catalysis. Cys-103 and Cys-200 are joined by a disulfide. Residue Gly-127 participates in ATP binding. Residues 150 to 152 (KDQ) are interaction with tRNA. Cys-200 functions as the Cysteine persulfide intermediate in the catalytic mechanism. The tract at residues 312–313 (RY) is interaction with tRNA.

It belongs to the MnmA/TRMU family.

Its subcellular location is the cytoplasm. The catalysed reaction is S-sulfanyl-L-cysteinyl-[protein] + uridine(34) in tRNA + AH2 + ATP = 2-thiouridine(34) in tRNA + L-cysteinyl-[protein] + A + AMP + diphosphate + H(+). Functionally, catalyzes the 2-thiolation of uridine at the wobble position (U34) of tRNA, leading to the formation of s(2)U34. This chain is tRNA-specific 2-thiouridylase MnmA, found in Streptococcus pneumoniae (strain 70585).